We begin with the raw amino-acid sequence, 261 residues long: GTP cyclohydrolase FolE2 (261 aa).

Belongs to the GTP cyclohydrolase IV family.

It carries out the reaction GTP + H2O = 7,8-dihydroneopterin 3'-triphosphate + formate + H(+). It participates in cofactor biosynthesis; 7,8-dihydroneopterin triphosphate biosynthesis; 7,8-dihydroneopterin triphosphate from GTP: step 1/1. Its function is as follows. Converts GTP to 7,8-dihydroneopterin triphosphate. This Fervidobacterium nodosum (strain ATCC 35602 / DSM 5306 / Rt17-B1) protein is GTP cyclohydrolase FolE2.